The chain runs to 158 residues: Class 10 plant pathogenesis-related protein 2B (158 aa).

Asp-8 contributes to the trans-zeatin binding site. Ca(2+)-binding residues include Pro-32, Val-35, and Ile-38. Residues Glu-60, His-69, Tyr-81, and Tyr-83 each coordinate trans-zeatin. Tyr-83 lines the melatonin pocket.

This sequence belongs to the BetVI family.

Its subcellular location is the cytoplasm. It is found in the cytosol. Its function is as follows. Class II ribonuclease (RNase). Binds to several cytokinins including natural adenine-type (e.g. trans-zeatin and kinetin) and artificial urea-type (e.g. N,N'-diphenylurea and N-phenyl-N'-(2-chloro-4-pyridyl)urea) hormones. Interacts with melatonin. This Lupinus luteus (European yellow lupine) protein is Class 10 plant pathogenesis-related protein 2B.